The following is a 172-amino-acid chain: MFVNSVLAESNSLYIGDLVFYIVTFIILMLLVKHFAWKPVTDMMKKRADKIANDIDNAARSRESAEKMAAKRQAELQSSRQEAAEIVSNAKKSGETQRAQIVETAQKDAQALKQQAQKDAEQARRDALNSAKDDVANLSIEIASKLIQKELKADDQKELIDSYIEGLVEHES.

The chain crosses the membrane as a helical span at residues 12–32 (SLYIGDLVFYIVTFIILMLLV). 2 stretches are compositionally biased toward basic and acidic residues: residues 63-74 (ESAEKMAAKRQA) and 116-131 (AQKD…LNSA). Residues 63-131 (ESAEKMAAKR…QARRDALNSA (69 aa)) are disordered.

Belongs to the ATPase B chain family. F-type ATPases have 2 components, F(1) - the catalytic core - and F(0) - the membrane proton channel. F(1) has five subunits: alpha(3), beta(3), gamma(1), delta(1), epsilon(1). F(0) has three main subunits: a(1), b(2) and c(10-14). The alpha and beta chains form an alternating ring which encloses part of the gamma chain. F(1) is attached to F(0) by a central stalk formed by the gamma and epsilon chains, while a peripheral stalk is formed by the delta and b chains.

The protein localises to the cell membrane. F(1)F(0) ATP synthase produces ATP from ADP in the presence of a proton or sodium gradient. F-type ATPases consist of two structural domains, F(1) containing the extramembraneous catalytic core and F(0) containing the membrane proton channel, linked together by a central stalk and a peripheral stalk. During catalysis, ATP synthesis in the catalytic domain of F(1) is coupled via a rotary mechanism of the central stalk subunits to proton translocation. Its function is as follows. Component of the F(0) channel, it forms part of the peripheral stalk, linking F(1) to F(0). In Limosilactobacillus reuteri (strain DSM 20016) (Lactobacillus reuteri), this protein is ATP synthase subunit b.